The primary structure comprises 207 residues: MAALVEPLGLERDVSRAVELLERLQRSGELPPQKLQALQRVLQSRFCSAIREVYEQLYDTLDITGSAEVRAHATAKATVAAFTASEGHAHPRVVELPKTDEGLGFNIMGGKEQNSPIYISRVIPGGVADRHGGLKRGDQLLSVNGVSVEGEHHEKAVELLKAAQGSVKLVVRYTPRVLEEMEARFEKMRSARRRQQHHSYSSLESRG.

A Kinase interacting site motif is present at residues 1 to 13 (MAALVEPLGLERD). The region spanning 10–65 (LERDVSRAVELLERLQRSGELPPQKLQALQRVLQSRFCSAIREVYEQLYDTLDITG) is the L27 domain. Residues 93 to 175 (VVELPKTDEG…SVKLVVRYTP (83 aa)) enclose the PDZ domain. The disordered stretch occupies residues 187–207 (KMRSARRRQQHHSYSSLESRG). Residues 198 to 207 (HSYSSLESRG) are compositionally biased toward polar residues.

The protein belongs to the lin-7 family. As to quaternary structure, forms two exclusive ternary complexes with CASK and CASKIN1. The brain-specific heterotrimeric complex (LIN-10-LIN-2-LIN-7 complex) composed of at least APBA1, CASK, and LIN7, associates with the motor protein KIF17 to transport vesicles along microtubules. Forms a heterotrimeric complex composed of MMP5, LIN7B and PATJ; the N-terminal L27 domain of PALS1 interacts with the L27 domain of PATJ and the C-terminal L27 domain of PALS1 interacts with the L27 domain of LIN7B. Forms a heterotrimeric complex with DLG1 and CASK via their L27 domains. Interacts with DLG4 and GRIN2B as well as CDH1 and CTNNB1, the channels KCNJ12/Kir2.2, KCNJ4/Kir2.3 and probably KCNJ2/Kir2.1 and SLC6A12/BGT-1 via its PDZ domain. The association of LIN7A with cadherin and beta-catenin is calcium-dependent, occurs at synaptic junctions and requires the actin cytoskeleton. Interacts with EGFR, ERBB2, ERBB3 and ERBB4 with both PDZ and KID domains. Associates with KIF17 via APBA1. Interacts with ASIC3. Interacts with TOPK. Interacts with RTKN. Interacts with APBA1. Interacts with MPP7. Interacts with DLG2. Interacts with DLG3. Expressed only in brain.

It is found in the cell membrane. The protein resides in the basolateral cell membrane. Its subcellular location is the cell junction. It localises to the postsynaptic density membrane. The protein localises to the tight junction. Its function is as follows. Plays a role in establishing and maintaining the asymmetric distribution of channels and receptors at the plasma membrane of polarized cells. Forms membrane-associated multiprotein complexes that may regulate delivery and recycling of proteins to the correct membrane domains. The tripartite complex composed of LIN7 (LIN7A, LIN7B or LIN7C), CASK and APBA1 associates with the motor protein KIF17 to transport vesicles containing N-methyl-D-aspartate (NMDA) receptor subunit NR2B along microtubules. This complex may have the potential to couple synaptic vesicle exocytosis to cell adhesion in brain. Ensures the proper localization of GRIN2B (subunit 2B of the NMDA receptor) to neuronal postsynaptic density and may function in localizing synaptic vesicles at synapses where it is recruited by beta-catenin and cadherin. Required to localize Kir2 channels, GABA transporter (SLC6A12) and EGFR/ERBB1, ERBB2, ERBB3 and ERBB4 to the basolateral membrane of epithelial cells. May increase the amplitude of ASIC3 acid-evoked currents by stabilizing the channel at the cell surface. The chain is Protein lin-7 homolog B (Lin7b) from Rattus norvegicus (Rat).